A 69-amino-acid polypeptide reads, in one-letter code: uncharacterized protein (69 aa).

The stretch at 21-64 forms a coiled coil; sequence LNLLKGGEEKISEVELKLDEMEKKMDSLLVQLEDLHRDNNDLAK.

This is an uncharacterized protein from Saccharomyces cerevisiae (strain ATCC 204508 / S288c) (Baker's yeast).